A 678-amino-acid chain; its full sequence is uncharacterized protein (678 aa).

A disordered region spans residues 1–26 (MGVHFDDNANTTWEATDPGVSSDCDG). Helical transmembrane passes span 119 to 139 (LLLLIVYCCFWMRIFYSLIYP), 245 to 265 (SFPCASAVHAGVISPFYGGCT), 317 to 337 (AAVVALNMLFGLPIFYLYDSI), 340 to 360 (YWINTIVGYWTLVLSLDPPLL), 371 to 391 (ELFSVGFQRLLPLCFVLYVVW), 405 to 425 (IAKVILWYPTFWLGISNNVTF), 443 to 463 (GALTAVGSIAATILTCAVIQA), 475 to 495 (YFKIYICFIGGLIALGSLPGL), and 519 to 539 (AYLFQGILVGLILSGVARWDF).

It localises to the vacuole membrane. This is an uncharacterized protein from Saccharomyces cerevisiae (strain ATCC 204508 / S288c) (Baker's yeast).